A 178-amino-acid polypeptide reads, in one-letter code: uncharacterized protein (178 aa).

Residues 152–178 form a disordered region; it reads KKLKGAEPKEHQAPNFEPPTEIFPESN.

This sequence belongs to the EUO family.

This is an uncharacterized protein from Chlamydia pneumoniae (Chlamydophila pneumoniae).